We begin with the raw amino-acid sequence, 95 residues long: Sec-independent protein translocase protein TatA (95 aa).

Residues 1 to 21 (MGSMSVWHWVIVAVVVMLLFG) traverse the membrane as a helical segment. Positions 42-95 (GMADDETQPNTATSVPPVGPNDPVRTLPHQGAPGTAPQPPHVQPHVPAGDHKAV) are disordered.

This sequence belongs to the TatA/E family. The Tat system comprises two distinct complexes: a TatABC complex, containing multiple copies of TatA, TatB and TatC subunits, and a separate TatA complex, containing only TatA subunits. Substrates initially bind to the TatABC complex, which probably triggers association of the separate TatA complex to form the active translocon.

It is found in the cell inner membrane. Functionally, part of the twin-arginine translocation (Tat) system that transports large folded proteins containing a characteristic twin-arginine motif in their signal peptide across membranes. TatA could form the protein-conducting channel of the Tat system. The protein is Sec-independent protein translocase protein TatA of Methylorubrum extorquens (strain PA1) (Methylobacterium extorquens).